Consider the following 138-residue polypeptide: Putative nickel-responsive regulator (138 aa).

Residues His-78, His-89, His-91, and Cys-97 each coordinate Ni(2+).

The protein belongs to the transcriptional regulatory CopG/NikR family. It depends on Ni(2+) as a cofactor.

Its function is as follows. Transcriptional regulator. This is Putative nickel-responsive regulator from Pyrococcus horikoshii (strain ATCC 700860 / DSM 12428 / JCM 9974 / NBRC 100139 / OT-3).